The sequence spans 381 residues: Creatine kinase B-type (381 aa).

Phosphoserine is present on serine 4. A Phosphagen kinase N-terminal domain is found at 11-98; sequence KLRFPAEDEF…FDPIIEDRHG (88 aa). Threonine 35 bears the Phosphothreonine mark. A Glycyl lysine isopeptide (Lys-Gly) (interchain with G-Cter in ubiquitin) cross-link involves residue lysine 45. Position 72 (valine 72) interacts with creatine. A compositionally biased stretch (basic and acidic residues) spans 96–110; sequence RHGGYKPSDEHKTDL. The tract at residues 96–123 is disordered; the sequence is RHGGYKPSDEHKTDLNPDNLQGGDDLDP. Residues lysine 101 and lysine 107 each participate in a glycyl lysine isopeptide (Lys-Gly) (interchain with G-Cter in ubiquitin) cross-link. Residue tyrosine 125 is modified to Phosphotyrosine. A Phosphagen kinase C-terminal domain is found at 125–367; sequence YVLSSRVRTG…KLLIEMEQRL (243 aa). ATP is bound by residues 128-132, arginine 130, arginine 132, and histidine 191; that span reads SSRVR. Residues 130–138 form an internal MTS-like signal region; it reads RVRTGRSIR. Serine 199 carries the phosphoserine modification. A creatine-binding site is contributed by glutamate 232. Arginine 236 contacts ATP. Tyrosine 269 is modified (3'-nitrotyrosine). Serine 285 is a creatine binding site. Arginine 292 contributes to the ATP binding site. Position 309 is a phosphoserine (serine 309). ATP-binding positions include arginine 320, 320–325, and aspartate 335; that span reads RGTGGV. Threonine 322 carries the post-translational modification Phosphothreonine. Lysine 381 participates in a covalent cross-link: Glycyl lysine isopeptide (Lys-Gly) (interchain with G-Cter in ubiquitin).

The protein belongs to the ATP:guanido phosphotransferase family. As to quaternary structure, dimer of identical or non-identical chains, which can be either B (brain type) or M (muscle type). With MM being the major form in skeletal muscle and myocardium, MB existing in myocardium, and BB existing in many tissues, especially brain. Interacts with SLC12A6 (via C-terminus); the interaction may be required for SLC12A6 potassium-chloride cotransport activity. In terms of processing, ubiquitinated by the ECS(ASB9) complex, leading to its degradation by the proteasome.

It is found in the cytoplasm. It localises to the cytosol. Its subcellular location is the mitochondrion. The protein resides in the cell membrane. The enzyme catalyses creatine + ATP = N-phosphocreatine + ADP + H(+). Reversibly catalyzes the transfer of phosphate between ATP and various phosphogens (e.g. creatine phosphate). Creatine kinase isoenzymes play a central role in energy transduction in tissues with large, fluctuating energy demands, such as skeletal muscle, heart, brain and spermatozoa. Acts as a key regulator of adaptive thermogenesis as part of the futile creatine cycle: localizes to the mitochondria of thermogenic fat cells and acts by mediating phosphorylation of creatine to initiate a futile cycle of creatine phosphorylation and dephosphorylation. During the futile creatine cycle, creatine and N-phosphocreatine are in a futile cycle, which dissipates the high energy charge of N-phosphocreatine as heat without performing any mechanical or chemical work. This Oryctolagus cuniculus (Rabbit) protein is Creatine kinase B-type (CKB).